We begin with the raw amino-acid sequence, 88 residues long: Phosphocarrier protein HPr (88 aa).

An HPr domain is found at 2 to 88; the sequence is AQKTFKVTAD…ETMKSEGLGE (87 aa). Position 12 is a phosphoserine (Ser-12). The active-site Pros-phosphohistidine intermediate; alternate is His-15. His-15 is subject to Tele-phosphohistidine; alternate. Ser-46 is subject to Phosphoserine; by HPrK/P.

It belongs to the HPr family. Post-translationally, phosphorylated during sporulation.

Its subcellular location is the cytoplasm. Phosphorylation on Ser-46 inhibits the phosphoryl transfer from enzyme I to HPr. Its function is as follows. General (non sugar-specific) component of the phosphoenolpyruvate-dependent sugar phosphotransferase system (sugar PTS). This major carbohydrate active-transport system catalyzes the phosphorylation of incoming sugar substrates concomitantly with their translocation across the cell membrane. The phosphoryl group from phosphoenolpyruvate (PEP) is transferred to the phosphoryl carrier protein HPr by enzyme I. Phospho-HPr then transfers it to the PTS EIIA domain. Functionally, P-Ser-HPr interacts with the catabolite control protein A (CcpA), forming a complex that binds to DNA at the catabolite response elements cre, operator sites preceding a large number of catabolite-regulated genes. Thus, P-Ser-HPr is a corepressor in carbon catabolite repression (CCR), a mechanism that allows bacteria to coordinate and optimize the utilization of available carbon sources. P-Ser-HPr also plays a role in inducer exclusion, in which it probably interacts with several non-PTS permeases and inhibits their transport activity. The protein is Phosphocarrier protein HPr (ptsH) of Bacillus subtilis (strain 168).